Consider the following 653-residue polypeptide: Beta-galactosidase-1-like protein 3 (653 aa).

Glu227 functions as the Proton donor in the catalytic mechanism. Glu301 functions as the Nucleophile in the catalytic mechanism.

The protein belongs to the glycosyl hydrolase 35 family.

The sequence is that of Beta-galactosidase-1-like protein 3 (GLB1L3) from Homo sapiens (Human).